A 332-amino-acid polypeptide reads, in one-letter code: L-lactate dehydrogenase A chain (332 aa).

NAD(+)-binding positions include 29–57 and arginine 99; that span reads GMVG…MEEK. Substrate contacts are provided by arginine 106, asparagine 138, and arginine 169. Residue asparagine 138 participates in NAD(+) binding. The active-site Proton acceptor is histidine 193. Threonine 248 serves as a coordination point for substrate.

The protein belongs to the LDH/MDH superfamily. LDH family. In terms of assembly, homotetramer.

It localises to the cytoplasm. The catalysed reaction is (S)-lactate + NAD(+) = pyruvate + NADH + H(+). The protein operates within fermentation; pyruvate fermentation to lactate; (S)-lactate from pyruvate: step 1/1. Interconverts simultaneously and stereospecifically pyruvate and lactate with concomitant interconversion of NADH and NAD(+). This Lycodichthys dearborni (Antarctic eelpout) protein is L-lactate dehydrogenase A chain (ldha).